The chain runs to 164 residues: MEFFFYSSSLATIVFTVCSIFSRNLMYSLLYLILSFVFTSCVFFSLGATFAAALEVIIYAGAIMVLFVFFIMMFNFKKSTLYAEKIFDKNNYYYINFLFLLCILIFPFFFILSYLYKEKIFYMVVSTKLVAIKLFSDYILVIELSSIVLLSALIIVSHIGKIRR.

5 consecutive transmembrane segments (helical) span residues 1–21 (MEFFFYSSSLATIVFTVCSIF), 30–50 (LYLILSFVFTSCVFFSLGATF), 54–74 (LEVIIYAGAIMVLFVFFIMMF), 94–114 (YINFLFLLCILIFPFFFILSY), and 138–158 (YILVIELSSIVLLSALIIVSH).

This sequence belongs to the complex I subunit 6 family. Composed of 13 different subunits. Subunits NuoA, H, J, K, L, M, N constitute the membrane sector of the complex.

Its subcellular location is the cell membrane. The catalysed reaction is a quinone + NADH + 5 H(+)(in) = a quinol + NAD(+) + 4 H(+)(out). NDH-1 shuttles electrons from NADH, via FMN and iron-sulfur (Fe-S) centers, to quinones in the respiratory chain. Couples the redox reaction to proton translocation (for every two electrons transferred, four hydrogen ions are translocated across the cytoplasmic membrane), and thus conserves the redox energy in a proton gradient. The polypeptide is NADH-quinone oxidoreductase subunit J (nuoJ) (Buchnera aphidicola subsp. Baizongia pistaciae (strain Bp)).